The chain runs to 436 residues: 3-phosphoshikimate 1-carboxyvinyltransferase (436 aa).

Positions 23, 24, and 28 each coordinate 3-phosphoshikimate. Phosphoenolpyruvate is bound at residue lysine 23. Phosphoenolpyruvate is bound by residues glycine 97 and arginine 126. Residues serine 171, glutamine 173, aspartate 323, and lysine 350 each contribute to the 3-phosphoshikimate site. Residue glutamine 173 coordinates phosphoenolpyruvate. Aspartate 323 (proton acceptor) is an active-site residue. Phosphoenolpyruvate is bound by residues arginine 354 and arginine 396.

This sequence belongs to the EPSP synthase family. In terms of assembly, monomer.

The protein localises to the cytoplasm. The catalysed reaction is 3-phosphoshikimate + phosphoenolpyruvate = 5-O-(1-carboxyvinyl)-3-phosphoshikimate + phosphate. The protein operates within metabolic intermediate biosynthesis; chorismate biosynthesis; chorismate from D-erythrose 4-phosphate and phosphoenolpyruvate: step 6/7. Functionally, catalyzes the transfer of the enolpyruvyl moiety of phosphoenolpyruvate (PEP) to the 5-hydroxyl of shikimate-3-phosphate (S3P) to produce enolpyruvyl shikimate-3-phosphate and inorganic phosphate. The chain is 3-phosphoshikimate 1-carboxyvinyltransferase from Prochlorococcus marinus (strain MIT 9301).